The sequence spans 1548 residues: Dicer-like protein 1 (1548 aa).

Over residues 1 to 41 (MGDPAAHEMADLERGFSSEDDAEYRSGDDEASKFVENEPSK) the composition is skewed to basic and acidic residues. Residues 1-48 (MGDPAAHEMADLERGFSSEDDAEYRSGDDEASKFVENEPSKRGKISQK) form a disordered region. In terms of domain architecture, Helicase ATP-binding spans 106-289 (LFERAKQQNT…QAAIELEGLL (184 aa)). 119–126 (LDTGSGKT) contributes to the ATP binding site. Residues 232 to 235 (DEAH) carry the DEAH box motif. The 162-residue stretch at 428-589 (TLSKLLEEYF…FCNTQPEDRL (162 aa)) folds into the Helicase C-terminal domain. Residues 624–718 (SLPILQAFLN…RSKFVEKRHV (95 aa)) form the Dicer dsRNA-binding fold domain. Residues 871 to 1006 (PLLRHVADRD…FVLEPMRISP (136 aa)) form the PAZ domain. RNase III domains follow at residues 1051 to 1197 (LTKD…MTTR) and 1248 to 1411 (AQKI…VDSK). 3 residues coordinate Mg(2+): Glu-1288, Asp-1397, and Glu-1400. The 74-residue stretch at 1445–1518 (TFFTQYVFET…ARKALDKLRS (74 aa)) folds into the DRBM domain. The Zn(2+) site is built by Cys-1457, His-1489, Cys-1530, and Cys-1532.

Belongs to the helicase family. Dicer subfamily. It depends on Mg(2+) as a cofactor. The cofactor is Mn(2+).

Functionally, dicer-like endonuclease involved in cleaving double-stranded RNA in the RNA interference (RNAi) pathway. Produces 21 to 25 bp dsRNAs (siRNAs) which target the selective destruction of homologous RNAs leading to sequence-specific suppression of gene expression, called post-transcriptional gene silencing (PTGS). Part of a broad host defense response against viral infection and transposons. The chain is Dicer-like protein 1 (DCL-1) from Cryphonectria parasitica (Chestnut blight fungus).